A 318-amino-acid polypeptide reads, in one-letter code: 26 kDa endochitinase 1 (318 aa).

The N-terminal stretch at 1–19 (MRAFVLFAVVAMAATMAVA) is a signal peptide. The region spanning 20–59 (EQCGSQAGGATCPNCLCCSRFGWCGSTPYCGDGCQSQCSG) is the Chitin-binding type-1 domain. Disulfide bonds link Cys-22–Cys-37, Cys-31–Cys-43, Cys-36–Cys-49, Cys-53–Cys-57, Cys-98–Cys-160, Cys-172–Cys-180, and Cys-279–Cys-311. The active-site Proton donor is Glu-142.

Belongs to the glycosyl hydrolase 19 family. Chitinase class I subfamily.

It catalyses the reaction Random endo-hydrolysis of N-acetyl-beta-D-glucosaminide (1-&gt;4)-beta-linkages in chitin and chitodextrins.. Its function is as follows. Defense against chitin-containing fungal pathogens. The sequence is that of 26 kDa endochitinase 1 from Hordeum vulgare (Barley).